The primary structure comprises 470 residues: Glutamyl-tRNA reductase (470 aa).

Substrate contacts are provided by residues threonine 49 to arginine 52, serine 109, glutamate 114 to glutamine 116, and glutamine 120. Cysteine 50 functions as the Nucleophile in the catalytic mechanism. Residue glycine 223–glycine 228 participates in NADP(+) binding.

Belongs to the glutamyl-tRNA reductase family. In terms of assembly, homodimer.

The enzyme catalyses (S)-4-amino-5-oxopentanoate + tRNA(Glu) + NADP(+) = L-glutamyl-tRNA(Glu) + NADPH + H(+). It functions in the pathway porphyrin-containing compound metabolism; protoporphyrin-IX biosynthesis; 5-aminolevulinate from L-glutamyl-tRNA(Glu): step 1/2. In terms of biological role, catalyzes the NADPH-dependent reduction of glutamyl-tRNA(Glu) to glutamate 1-semialdehyde (GSA). The protein is Glutamyl-tRNA reductase of Frankia alni (strain DSM 45986 / CECT 9034 / ACN14a).